A 331-amino-acid chain; its full sequence is MVREEIAVSTRTLQWKCVESRADSKRLYYGRFVLSPLMKGQADTIGIAMRRALLGEIEGTCITRAKSEKVPHEYSTIVGIEESVHEILMNLKEIVFRSHLYGTRGASICVRGPRYVTAQDIISPPSVKIVDTTQYIASLTEPIDLCIELQIERDRGYRIKTPNNYQDGSYPIDAVSMPVRNANHSIHSYGNGNEKQEILFLEIWTNGSFTPKEALYEASRNLIDLFLPFLHAEEQDINVEDNQNRATAPLFTFHDGLTNIGKRKKGIALKRVFIDQSELPTRTYNCLKRSNIHTLLDLLSNSQEDLMRIEHFRIEDVKQILGILQKRFAID.

Residues 1–233 (MVREEIAVST…DLFLPFLHAE (233 aa)) are alpha N-terminal domain (alpha-NTD). The alpha C-terminal domain (alpha-CTD) stretch occupies residues 268–331 (ALKRVFIDQS…GILQKRFAID (64 aa)).

Belongs to the RNA polymerase alpha chain family. As to quaternary structure, in plastids the minimal PEP RNA polymerase catalytic core is composed of four subunits: alpha, beta, beta', and beta''. When a (nuclear-encoded) sigma factor is associated with the core the holoenzyme is formed, which can initiate transcription.

The protein localises to the plastid. It localises to the chloroplast. It catalyses the reaction RNA(n) + a ribonucleoside 5'-triphosphate = RNA(n+1) + diphosphate. In terms of biological role, DNA-dependent RNA polymerase catalyzes the transcription of DNA into RNA using the four ribonucleoside triphosphates as substrates. This chain is DNA-directed RNA polymerase subunit alpha, found in Illicium oligandrum (Star anise).